A 112-amino-acid polypeptide reads, in one-letter code: ATP synthase epsilon chain (112 aa).

The protein belongs to the ATPase epsilon chain family. As to quaternary structure, F-type ATPases have 2 components, CF(1) - the catalytic core - and CF(0) - the membrane proton channel. CF(1) has five subunits: alpha(3), beta(3), gamma(1), delta(1), epsilon(1). CF(0) has three main subunits: a, b and c.

It is found in the cell inner membrane. Functionally, produces ATP from ADP in the presence of a proton gradient across the membrane. This is ATP synthase epsilon chain from Rickettsia peacockii (strain Rustic).